Here is a 102-residue protein sequence, read N- to C-terminus: N(4)-acetylcytidine amidohydrolase (102 aa).

In terms of domain architecture, ASCH spans 6–93 (TFFSRFEQDI…IKEIYPGLDE (88 aa)). The Proton acceptor role is filled by Lys20. Residue Thr23 is the Nucleophile of the active site. Catalysis depends on Glu73, which acts as the Proton donor.

It belongs to the N(4)-acetylcytidine amidohydrolase family.

The catalysed reaction is N(4)-acetylcytidine + H2O = cytidine + acetate + H(+). It carries out the reaction N(4)-acetyl-2'-deoxycytidine + H2O = 2'-deoxycytidine + acetate + H(+). It catalyses the reaction N(4)-acetylcytosine + H2O = cytosine + acetate + H(+). Its function is as follows. Catalyzes the hydrolysis of N(4)-acetylcytidine (ac4C). This is N(4)-acetylcytidine amidohydrolase from Serratia proteamaculans (strain 568).